Here is a 311-residue protein sequence, read N- to C-terminus: Glycosyltransferase 6 domain-containing protein 1 (311 aa).

The Cytoplasmic segment spans residues 1-5 (MKAKR). Residues 6–26 (RILLQLLTFCLFLLLLAKIHF) traverse the membrane as a helical; Signal-anchor for type II membrane protein segment. Residues 27–311 (RNHQEEELLL…KIAHHPIDTL (285 aa)) are Lumenal-facing. A glycan (N-linked (GlcNAc...) asparagine) is linked at Asn77. Substrate-binding positions include 85 to 90 (FAVGSL), 176 to 178 (NIN), and 198 to 201 (HPWW). The Nucleophile role is filled by Glu266.

This sequence belongs to the glycosyltransferase 6 family. Mn(2+) is required as a cofactor.

The protein resides in the membrane. The protein is Glycosyltransferase 6 domain-containing protein 1 (Glt6d1) of Mus musculus (Mouse).